The sequence spans 450 residues: Plasminogen-binding protein PgbA (450 aa).

3 stretches are compositionally biased toward basic and acidic residues: residues 262-273 (EIKQEAIKEPKK), 284-310 (LEEKNYQKAERKFDAKEERRRSRDERK), and 317-362 (KAME…REIN). Positions 262 to 450 (EIKQEAIKEP…RRKALEMNKK (189 aa)) are disordered. Positions 363 to 386 (QESANEPSSENNATLKDTENTSVL) are enriched in polar residues. Positions 389–450 (SAAKKEAPKP…RRKALEMNKK (62 aa)) are enriched in basic and acidic residues.

It is found in the cell surface. Functionally, binds plasminogen, specifically, and in a concentration and lysine-dependent manner. Plasminogen is the precursor of plasmin, a serine protease that cleaves fibrin, fibronectin, laminin and vitronectin. Acquisition of plasminogen/plasmin could enable H.pylori to degrade host components. This Helicobacter pylori (strain J99 / ATCC 700824) (Campylobacter pylori J99) protein is Plasminogen-binding protein PgbA (pgbA).